A 73-amino-acid chain; its full sequence is UPF0154 protein LGAS_0795 (73 aa).

A helical membrane pass occupies residues 3–23; the sequence is LGLAIFLIIIALLIGLVGGFY.

This sequence belongs to the UPF0154 family.

The protein resides in the cell membrane. The polypeptide is UPF0154 protein LGAS_0795 (Lactobacillus gasseri (strain ATCC 33323 / DSM 20243 / BCRC 14619 / CIP 102991 / JCM 1131 / KCTC 3163 / NCIMB 11718 / NCTC 13722 / AM63)).